Reading from the N-terminus, the 104-residue chain is UPF0235 protein Paes_1868 (104 aa).

Belongs to the UPF0235 family.

The sequence is that of UPF0235 protein Paes_1868 from Prosthecochloris aestuarii (strain DSM 271 / SK 413).